The sequence spans 429 residues: Glutamate-1-semialdehyde 2,1-aminomutase (429 aa).

Residue K267 is modified to N6-(pyridoxal phosphate)lysine.

It belongs to the class-III pyridoxal-phosphate-dependent aminotransferase family. HemL subfamily. As to quaternary structure, homodimer. Pyridoxal 5'-phosphate is required as a cofactor.

It is found in the cytoplasm. The catalysed reaction is (S)-4-amino-5-oxopentanoate = 5-aminolevulinate. It functions in the pathway porphyrin-containing compound metabolism; protoporphyrin-IX biosynthesis; 5-aminolevulinate from L-glutamyl-tRNA(Glu): step 2/2. This chain is Glutamate-1-semialdehyde 2,1-aminomutase, found in Stenotrophomonas maltophilia (strain K279a).